The sequence spans 121 residues: Large ribosomal subunit protein bL20 (121 aa).

The protein belongs to the bacterial ribosomal protein bL20 family.

In terms of biological role, binds directly to 23S ribosomal RNA and is necessary for the in vitro assembly process of the 50S ribosomal subunit. It is not involved in the protein synthesizing functions of that subunit. The protein is Large ribosomal subunit protein bL20 of Moorella thermoacetica (strain ATCC 39073 / JCM 9320).